We begin with the raw amino-acid sequence, 35 residues long: UPF0387 membrane protein YohO (35 aa).

Residues Ile-6–Ala-26 form a helical membrane-spanning segment.

This sequence belongs to the UPF0387 family.

It localises to the cell inner membrane. The protein is UPF0387 membrane protein YohO of Escherichia coli O8 (strain IAI1).